The chain runs to 122 residues: Large ribosomal subunit protein uL14 (122 aa).

This sequence belongs to the universal ribosomal protein uL14 family. Part of the 50S ribosomal subunit. Forms a cluster with proteins L3 and L19. In the 70S ribosome, L14 and L19 interact and together make contacts with the 16S rRNA in bridges B5 and B8.

In terms of biological role, binds to 23S rRNA. Forms part of two intersubunit bridges in the 70S ribosome. This Orientia tsutsugamushi (strain Ikeda) (Rickettsia tsutsugamushi) protein is Large ribosomal subunit protein uL14.